We begin with the raw amino-acid sequence, 285 residues long: Bifunctional protein FolD (285 aa).

NADP(+) contacts are provided by residues Gly163 to Ser165, Ser188, and Ala231.

It belongs to the tetrahydrofolate dehydrogenase/cyclohydrolase family. Homodimer.

It catalyses the reaction (6R)-5,10-methylene-5,6,7,8-tetrahydrofolate + NADP(+) = (6R)-5,10-methenyltetrahydrofolate + NADPH. It carries out the reaction (6R)-5,10-methenyltetrahydrofolate + H2O = (6R)-10-formyltetrahydrofolate + H(+). Its pathway is one-carbon metabolism; tetrahydrofolate interconversion. Catalyzes the oxidation of 5,10-methylenetetrahydrofolate to 5,10-methenyltetrahydrofolate and then the hydrolysis of 5,10-methenyltetrahydrofolate to 10-formyltetrahydrofolate. This is Bifunctional protein FolD from Oenococcus oeni (strain ATCC BAA-331 / PSU-1).